A 274-amino-acid chain; its full sequence is 2,3,4,5-tetrahydropyridine-2,6-dicarboxylate N-succinyltransferase (274 aa).

Substrate contacts are provided by arginine 104 and aspartate 141.

It belongs to the transferase hexapeptide repeat family. As to quaternary structure, homotrimer.

Its subcellular location is the cytoplasm. The enzyme catalyses (S)-2,3,4,5-tetrahydrodipicolinate + succinyl-CoA + H2O = (S)-2-succinylamino-6-oxoheptanedioate + CoA. It functions in the pathway amino-acid biosynthesis; L-lysine biosynthesis via DAP pathway; LL-2,6-diaminopimelate from (S)-tetrahydrodipicolinate (succinylase route): step 1/3. In Buchnera aphidicola subsp. Baizongia pistaciae (strain Bp), this protein is 2,3,4,5-tetrahydropyridine-2,6-dicarboxylate N-succinyltransferase.